A 732-amino-acid chain; its full sequence is Polyribonucleotide nucleotidyltransferase (732 aa).

Residues aspartate 483 and aspartate 489 each contribute to the Mg(2+) site. The KH domain maps to 550–609 (PRIVTVQIPVDKIGELIGPKGKNIRGIQDETGAELSVEDDGTVTIAAVGGDSMERAKQMV). The S1 motif domain occupies 619–687 (GETYEGTVKT…ERGRLRLSMK (69 aa)). Residues 684–732 (LSMKALLPKPEGMPDEPPQSERPRRDDGERSGGDRGGRGGRNGGGRDRR) are disordered. The span at 702 to 720 (QSERPRRDDGERSGGDRGG) shows a compositional bias: basic and acidic residues.

It belongs to the polyribonucleotide nucleotidyltransferase family. Mg(2+) is required as a cofactor.

The protein resides in the cytoplasm. It carries out the reaction RNA(n+1) + phosphate = RNA(n) + a ribonucleoside 5'-diphosphate. Functionally, involved in mRNA degradation. Catalyzes the phosphorolysis of single-stranded polyribonucleotides processively in the 3'- to 5'-direction. The chain is Polyribonucleotide nucleotidyltransferase from Gemmatimonas aurantiaca (strain DSM 14586 / JCM 11422 / NBRC 100505 / T-27).